The chain runs to 868 residues: Muscle, skeletal receptor tyrosine protein kinase (868 aa).

The N-terminal stretch at 1-21 (MRELVNIPLLQMLTLVAFSGT) is a signal peptide. Residues 22–494 (EKLPKAPVIT…FAVSPAYSMT (473 aa)) are Extracellular-facing. Ig-like domains are found at residues 28-116 (PVIT…GALQ), 121-205 (PKIT…KLVK), and 212-302 (ARIL…ATVS). 3 cysteine pairs are disulfide-bonded: Cys-49–Cys-99, Cys-98–Cys-112, and Cys-142–Cys-190. N-linked (GlcNAc...) asparagine glycosylation occurs at Asn-222. 6 disulfides stabilise this stretch: Cys-233–Cys-282, Cys-317–Cys-382, Cys-325–Cys-375, Cys-366–Cys-406, Cys-394–Cys-447, and Cys-398–Cys-434. The FZ domain maps to 312-450 (ESKGYCAQYR…HQDPTACTRL (139 aa)). A glycan (N-linked (GlcNAc...) asparagine) is linked at Asn-338. Asn-459 is a glycosylation site (N-linked (GlcNAc...) asparagine). Residues 495-515 (VIISIMSCFAVFALLTITTLY) traverse the membrane as a helical segment. Residues 516–868 (CCRRRREWKN…CERAEGTVGV (353 aa)) are Cytoplasmic-facing. Tyr-553 bears the Phosphotyrosine; by autocatalysis mark. Residues 574–855 (IEYVRDIGEG…PSFCSIHRIL (282 aa)) enclose the Protein kinase domain. ATP-binding positions include 580 to 588 (IGEGAFGRV) and Lys-608. Phosphoserine; by CK2 occurs at positions 680 and 697. The active-site Proton acceptor is the Asp-724. Tyr-754 is modified (phosphotyrosine; by autocatalysis).

Belongs to the protein kinase superfamily. Tyr protein kinase family. Monomer. Homodimer. Interacts with LRP4; the heterodimer forms an AGRIN receptor complex that binds AGRIN resulting in activation of MUSK. Forms a heterotetramer composed of 2 DOK7 and 2 MUSK molecules which facilitates MUSK trans-autophosphorylation on tyrosine residue and activation. Interacts (via cytoplasmic part) with DOK7 (via IRS-type PTB domain); requires MUSK phosphorylation. Interacts with DVL1 (via DEP domain); the interaction is direct and mediates the formation of a DVL1, MUSK and PAK1 ternary complex involved in AChR clustering. Interacts with PDZRN3; this interaction is enhanced by agrin. Interacts with FNTA; the interaction is direct and mediates AGRIN-induced phosphorylation and activation of FNTA. Interacts with CSNK2B; mediates regulation by CK2. Interacts (via the cytoplasmic domain) with DNAJA3. Interacts with NSF; may regulate MUSK endocytosis and activity. Interacts with CAV3; may regulate MUSK signaling. Interacts with RNF31. Interacts with DOK7. It depends on Mg(2+) as a cofactor. Post-translationally, ubiquitinated by PDZRN3. Ubiquitination promotes endocytosis and lysosomal degradation. Phosphorylated. Phosphorylation is induced by AGRIN in a LRP4-dependent manner. Autophosphorylated. Autophosphorylation at Tyr-553 is required for interaction with DOK7 which in turn stimulates the phosphorylation and the activation of MUSK. In terms of processing, neddylated. In terms of tissue distribution, muscle specific.

The protein resides in the postsynaptic cell membrane. It catalyses the reaction L-tyrosyl-[protein] + ATP = O-phospho-L-tyrosyl-[protein] + ADP + H(+). Positively regulated by CK2. Functionally, receptor tyrosine kinase which plays a central role in the formation and the maintenance of the neuromuscular junction (NMJ), the synapse between the motor neuron and the skeletal muscle. Recruitment of AGRIN by LRP4 to the MUSK signaling complex induces phosphorylation and activation of MUSK, the kinase of the complex. The activation of MUSK in myotubes regulates the formation of NMJs through the regulation of different processes including the specific expression of genes in subsynaptic nuclei, the reorganization of the actin cytoskeleton and the clustering of the acetylcholine receptors (AChR) in the postsynaptic membrane. May regulate AChR phosphorylation and clustering through activation of ABL1 and Src family kinases which in turn regulate MUSK. DVL1 and PAK1 that form a ternary complex with MUSK are also important for MUSK-dependent regulation of AChR clustering. May positively regulate Rho family GTPases through FNTA. Mediates the phosphorylation of FNTA which promotes prenylation, recruitment to membranes and activation of RAC1 a regulator of the actin cytoskeleton and of gene expression. Other effectors of the MUSK signaling include DNAJA3 which functions downstream of MUSK. May also play a role within the central nervous system by mediating cholinergic responses, synaptic plasticity and memory formation. The chain is Muscle, skeletal receptor tyrosine protein kinase (Musk) from Rattus norvegicus (Rat).